A 284-amino-acid chain; its full sequence is MLSKQIPLGIYEKALPAGECWLERLQLAKTLGFDFVEMSVDETDERLSRLDWSREQRLALVNAIVETGVRVPSMCLSAHRRFPLGSEDDAVRAQGLEIMRKAIQFAQDVGIRGIQLAGYDVYYQEANNETRRRFRDGLKESVEMASRAQVTLAMEIMDYPLMNSISKALGYAHYLNNPWFQLYPDIGNLSAWDNDVQMELQAGMGHIVAVHVKDTKPGVFKNVPFGEGVVDFERCFETLKQSGYCGPYLIEMWSETAEDPAAEVAKARDWVKARMAKAGMVEAA.

It belongs to the L-ribulose-5-phosphate 3-epimerase family.

The catalysed reaction is L-ribulose 5-phosphate = L-xylulose 5-phosphate. Its pathway is cofactor degradation; L-ascorbate degradation; D-xylulose 5-phosphate from L-ascorbate: step 3/4. Its function is as follows. Catalyzes the isomerization of L-xylulose-5-phosphate to L-ribulose-5-phosphate. Is involved in the anaerobic L-ascorbate utilization. The sequence is that of Putative L-ribulose-5-phosphate 3-epimerase UlaE from Shigella dysenteriae serotype 1 (strain Sd197).